The following is a 335-amino-acid chain: DNA-directed RNA polymerase subunit alpha (335 aa).

The alpha N-terminal domain (alpha-NTD) stretch occupies residues Met-1–Lys-231. The alpha C-terminal domain (alpha-CTD) stretch occupies residues Lys-263–Phe-335.

It belongs to the RNA polymerase alpha chain family. In terms of assembly, in plastids the minimal PEP RNA polymerase catalytic core is composed of four subunits: alpha, beta, beta', and beta''. When a (nuclear-encoded) sigma factor is associated with the core the holoenzyme is formed, which can initiate transcription.

It localises to the plastid. The protein localises to the chloroplast. The enzyme catalyses RNA(n) + a ribonucleoside 5'-triphosphate = RNA(n+1) + diphosphate. In terms of biological role, DNA-dependent RNA polymerase catalyzes the transcription of DNA into RNA using the four ribonucleoside triphosphates as substrates. This is DNA-directed RNA polymerase subunit alpha from Helianthus annuus (Common sunflower).